The chain runs to 1213 residues: MNIEQIFKKPLKRNINGVVKAEQTDDASAYIELDEYVITRELENHLRHFFESYVPATGPERIRMENKIGVWVSGFFGSGKSHFIKILSYLLSNRKVTHNGTERNAYSFFEEKIKDALFLADINKAVHYPTEVILFNIDSRANVDDKEDAILKVFLKVFNERIGYCADFPHIAHLERELDKRGQYETFKAAFADINGSRWEDERDAYYFISDDMAQALSQATQQSLEASRQWVEQLDKNFPLDINNFCQWVKEWLDDNGKNILFMVDEVGQFIGKNTQMMLKLQTITENLGVICGGRAWVIVTSQADINAAIGGMSSRDGQDFSKIQGRFSTRLQLSSSNTSEVIQKRLLVKTDEAKAALAKVWQEKGDILRNQLAFDTTTTTALRPFTSEEEFVDNYPFVPWHYQILQKVFESIRTKGAAGKQLAMGERSQLEAFQTAAQQISAQGLDSLVPFWRFYAAIESFLEPAVSRTITQACQNGILDEFDGNLLKTLFLIRYVETLKSTLDNLVTLSIDRIDADKVELRRRVEKSLNTLERLMLIARVEDKYVFLTNEEKEIENEIRNVDVDFSAINKKLASIIFDDILKSRKYRYPANKQDFDISRFLNGHPLDGAVLNDLVVKILTPKDPTYSFYNSDATCRPYTSEGDGCILIRLPEEGRTWSDIDLVVQTEKFLKDNAGQRPEQATLLSEKARENSNREKLLRVQLESLLAEADVWAIGERLPKKSSTPSNIVDEACRYVIENTFGKLKMLRPFNGDISREIHALLTVENDTELDLGNLEESNPDAMREVETWISMNIEYNKPVYLRDILNHFARRPYGWPEDEVKLLVARLACKGKFSFSQQNNNVERKQAWELFNNSRRHSELRLHKVRRHDEAQVRKAAQTMADIAQQPFNEREEPALVEHIRQVFEEWKQELNVFRAKAEGGNNPGKNEIESGLRLLNAILNEKEDFALIEKVSSLKDELLDFSEDREDLVDFYRKQFATWQKLGAALNGSFKSNRSALEKDAAAVKALGELESIWQMPEPYKHLNRITLLIEQVQNVNHQLVEQHRQHALERIDARIEESRQRLLEAHATSELQNSVLLPMQKARKRAEVSQSIPEILAEQQETKALQMDADKKINLWIDELRKKQEAQLRAANEAKRAAESEQTYVVVEKPVIQPVPKKTHLVNVASEMRNATGGEVLETTEQVEKALDTLRTTLLAAIKAGDRIRLQ.

Belongs to the BrxC family.

Functionally, BREX systems (bacteriophage exclusion) provide immunity against bacteriophage. Part of a type 1 BREX system which protects against dsDNA phage. This system allows phage adsorption but prevents phage DNA replication, without degradation of the phage DNA. Methylation of bacterial DNA by PglX guides self/non-self discrimination. When the brxA-brxB-brxC-pglX-pglZ-brxL genes are transformed into a susceptible E.coli strain (BW25113) they confer very high resistance to infection by bacteriophage VR7 and VpaE1, about 100-fold protection against lambda, T5 and T7 and no protection against RNA phage Qbeta, ssDNA phage M13 or dSDNA phage T4 and VR5. Glycosylated phage DNA is not susceptible to BREX. The BREX system does not confer resistance to lysogenic lambda phage, i.e. prophage that are integrated into the chromosomal DNA and then induced to form phage. This Escherichia coli O9:H4 (strain HS) protein is Probable ATP-binding protein BrxC.